The following is an 83-amino-acid chain: UPF0297 protein CKR_1221 (83 aa).

The protein belongs to the UPF0297 family.

This is UPF0297 protein CKR_1221 from Clostridium kluyveri (strain NBRC 12016).